The primary structure comprises 204 residues: Ribosomal RNA small subunit methyltransferase G (204 aa).

Residues G69, F74, 123–124 (IE), and R137 each bind S-adenosyl-L-methionine.

The protein belongs to the methyltransferase superfamily. RNA methyltransferase RsmG family.

Its subcellular location is the cytoplasm. It carries out the reaction guanosine(527) in 16S rRNA + S-adenosyl-L-methionine = N(7)-methylguanosine(527) in 16S rRNA + S-adenosyl-L-homocysteine. In terms of biological role, specifically methylates the N7 position of guanine in position 527 of 16S rRNA. The sequence is that of Ribosomal RNA small subunit methyltransferase G from Ruegeria pomeroyi (strain ATCC 700808 / DSM 15171 / DSS-3) (Silicibacter pomeroyi).